A 202-amino-acid chain; its full sequence is Acireductone dioxygenase (202 aa).

Histidine 110, histidine 112, glutamate 116, and histidine 154 together coordinate Fe(2+). Ni(2+) is bound by residues histidine 110, histidine 112, glutamate 116, and histidine 154.

It belongs to the acireductone dioxygenase (ARD) family. In terms of assembly, monomer. The cofactor is Fe(2+). Ni(2+) serves as cofactor.

The catalysed reaction is 1,2-dihydroxy-5-(methylsulfanyl)pent-1-en-3-one + O2 = 3-(methylsulfanyl)propanoate + CO + formate + 2 H(+). It catalyses the reaction 1,2-dihydroxy-5-(methylsulfanyl)pent-1-en-3-one + O2 = 4-methylsulfanyl-2-oxobutanoate + formate + 2 H(+). It functions in the pathway amino-acid biosynthesis; L-methionine biosynthesis via salvage pathway; L-methionine from S-methyl-5-thio-alpha-D-ribose 1-phosphate: step 5/6. Its function is as follows. Catalyzes 2 different reactions between oxygen and the acireductone 1,2-dihydroxy-3-keto-5-methylthiopentene (DHK-MTPene) depending upon the metal bound in the active site. Fe-containing acireductone dioxygenase (Fe-ARD) produces formate and 2-keto-4-methylthiobutyrate (KMTB), the alpha-ketoacid precursor of methionine in the methionine recycle pathway. Ni-containing acireductone dioxygenase (Ni-ARD) produces methylthiopropionate, carbon monoxide and formate, and does not lie on the methionine recycle pathway. This is Acireductone dioxygenase from Synechococcus sp. (strain CC9311).